We begin with the raw amino-acid sequence, 180 residues long: Bifunctional protein PyrR (180 aa).

Positions 101 to 113 (VILVDDVLYTGRT) match the PRPP-binding motif.

It belongs to the purine/pyrimidine phosphoribosyltransferase family. PyrR subfamily. As to quaternary structure, homodimer and homohexamer; in equilibrium.

It catalyses the reaction UMP + diphosphate = 5-phospho-alpha-D-ribose 1-diphosphate + uracil. Its function is as follows. Regulates transcriptional attenuation of the pyrimidine nucleotide (pyr) operon by binding in a uridine-dependent manner to specific sites on pyr mRNA. This disrupts an antiterminator hairpin in the RNA and favors formation of a downstream transcription terminator, leading to a reduced expression of downstream genes. Also displays a weak uracil phosphoribosyltransferase activity which is not physiologically significant. This chain is Bifunctional protein PyrR, found in Bacillus mycoides (strain KBAB4) (Bacillus weihenstephanensis).